Here is a 601-residue protein sequence, read N- to C-terminus: Glutathione-regulated potassium-efflux system protein KefB (601 aa).

A run of 13 helical transmembrane segments spans residues S5–A25, I29–F49, E55–L75, I87–W107, A115–M135, V152–G172, W180–R202, F207–G227, L230–L250, G268–Y288, I291–L311, L324–A344, and P356–V376. An RCK N-terminal domain is found at K400–T519.

It belongs to the monovalent cation:proton antiporter 2 (CPA2) transporter (TC 2.A.37) family. KefB subfamily. In terms of assembly, interacts with the regulatory subunit KefG.

Its subcellular location is the cell inner membrane. Its function is as follows. Pore-forming subunit of a potassium efflux system that confers protection against electrophiles. Catalyzes K(+)/H(+) antiport. The chain is Glutathione-regulated potassium-efflux system protein KefB from Erwinia tasmaniensis (strain DSM 17950 / CFBP 7177 / CIP 109463 / NCPPB 4357 / Et1/99).